The following is a 790-amino-acid chain: Probable E3 ubiquitin-protein ligase MARCHF10 (790 aa).

The tract at residues 33-240 (LKRQEHKKEP…PQNEPHTALS (208 aa)) is disordered. Positions 34 to 48 (KRQEHKKEPNEKKQE) are enriched in basic and acidic residues. Positions 61–70 (FSSGSSCKQS) are enriched in low complexity. At Ser78 the chain carries Phosphoserine. Over residues 218–227 (PLERQKKGDP) the composition is skewed to basic and acidic residues. Residues 230-240 (RPQNEPHTALS) show a composition bias toward polar residues. Residues 284–308 (LSLNNEQENYDTEEETRTEEELLLA) adopt a coiled-coil conformation. Disordered regions lie at residues 323-416 (GTSA…EDVS) and 507-569 (LSPI…RHLQ). Composition is skewed to polar residues over residues 355 to 370 (RKTS…SSPG), 406 to 416 (GVTQVSAEDVS), and 511 to 520 (RNRNPSAASE). Over residues 521–533 (SHSEDTQGEEERA) the composition is skewed to basic and acidic residues. Positions 534–563 (STSQAQESPLLSDLPNPQSSMALGDSPSSP) are enriched in polar residues. The RING-CH-type zinc finger occupies 633-703 (DSEEEGDLCR…EMCKQGLLVD (71 aa)). Residues Cys641, Cys644, Cys659, Cys661, His669, Cys672, Cys693, and Cys696 each coordinate Zn(2+). Residues 757-790 (ERMSRNYPQPRPEESESSESGDGNESNVYPGRVI) form a disordered region. A compositionally biased stretch (low complexity) spans 774–783 (SESGDGNESN).

The catalysed reaction is S-ubiquitinyl-[E2 ubiquitin-conjugating enzyme]-L-cysteine + [acceptor protein]-L-lysine = [E2 ubiquitin-conjugating enzyme]-L-cysteine + N(6)-ubiquitinyl-[acceptor protein]-L-lysine.. It functions in the pathway protein modification; protein ubiquitination. In terms of biological role, E3 ubiquitin-protein ligase. E3 ubiquitin ligases accept ubiquitin from an E2 ubiquitin-conjugating enzyme in the form of a thioester and then directly transfer the ubiquitin to targeted substrates. The sequence is that of Probable E3 ubiquitin-protein ligase MARCHF10 (Marchf10) from Rattus norvegicus (Rat).